The primary structure comprises 384 residues: Lipid-A-disaccharide synthase 1 (384 aa).

The protein belongs to the LpxB family.

It carries out the reaction a lipid X + a UDP-2-N,3-O-bis[(3R)-3-hydroxyacyl]-alpha-D-glucosamine = a lipid A disaccharide + UDP + H(+). The protein operates within bacterial outer membrane biogenesis; LPS lipid A biosynthesis. Condensation of UDP-2,3-diacylglucosamine and 2,3-diacylglucosamine-1-phosphate to form lipid A disaccharide, a precursor of lipid A, a phosphorylated glycolipid that anchors the lipopolysaccharide to the outer membrane of the cell. In Legionella pneumophila (strain Lens), this protein is Lipid-A-disaccharide synthase 1.